The primary structure comprises 311 residues: Putative HTH-type transcriptional regulatory protein MTH_967 (311 aa).

An HTH cro/C1-type domain is found at 134-192 (LREVREEYNLSLKDLADLAHVSRKTIYKYENGLARASAETAMILEEILNIRITLSIDIF). The segment at residues 145-164 (LKDLADLAHVSRKTIYKYEN) is a DNA-binding region (H-T-H motif).

The protein is Putative HTH-type transcriptional regulatory protein MTH_967 of Methanothermobacter thermautotrophicus (strain ATCC 29096 / DSM 1053 / JCM 10044 / NBRC 100330 / Delta H) (Methanobacterium thermoautotrophicum).